Consider the following 349-residue polypeptide: Eukaryotic translation initiation factor 3 subunit I (349 aa).

6 WD repeats span residues Gly8 to Glu49, His51 to Glu91, Pro93 to Lys135, Ser148 to Thr187, Glu197 to Lys239, and Gly295 to Asp336.

It belongs to the eIF-3 subunit I family. As to quaternary structure, component of the eukaryotic translation initiation factor 3 (eIF-3) complex.

The protein resides in the cytoplasm. Its function is as follows. Component of the eukaryotic translation initiation factor 3 (eIF-3) complex, which is involved in protein synthesis of a specialized repertoire of mRNAs and, together with other initiation factors, stimulates binding of mRNA and methionyl-tRNAi to the 40S ribosome. The eIF-3 complex specifically targets and initiates translation of a subset of mRNAs involved in cell proliferation. The polypeptide is Eukaryotic translation initiation factor 3 subunit I (Debaryomyces hansenii (strain ATCC 36239 / CBS 767 / BCRC 21394 / JCM 1990 / NBRC 0083 / IGC 2968) (Yeast)).